The following is a 681-amino-acid chain: Potassium-transporting ATPase ATP-binding subunit (681 aa).

4 consecutive transmembrane segments (helical) span residues 30–50 (LLVY…FFGI), 59–79 (LAIA…EAIA), 216–236 (ILLV…LPFT), and 255–275 (IALL…SIGI). Asp-306 acts as the 4-aspartylphosphate intermediate in catalysis. ATP is bound by residues Asp-343, Glu-347, 376-383 (FTATTRMS), and Lys-394. 2 residues coordinate Mg(2+): Asp-517 and Asp-521. A run of 3 helical transmembrane segments spans residues 587-607 (FAII…LNLM), 615-635 (AILS…PLSL), and 661-681 (LIAP…LGIV).

It belongs to the cation transport ATPase (P-type) (TC 3.A.3) family. Type IA subfamily. In terms of assembly, the system is composed of three essential subunits: KdpA, KdpB and KdpC.

Its subcellular location is the cell membrane. It carries out the reaction K(+)(out) + ATP + H2O = K(+)(in) + ADP + phosphate + H(+). Functionally, part of the high-affinity ATP-driven potassium transport (or Kdp) system, which catalyzes the hydrolysis of ATP coupled with the electrogenic transport of potassium into the cytoplasm. This subunit is responsible for energy coupling to the transport system and for the release of the potassium ions to the cytoplasm. This chain is Potassium-transporting ATPase ATP-binding subunit, found in Listeria monocytogenes serotype 4a (strain HCC23).